The sequence spans 437 residues: Glutamyl-tRNA reductase (437 aa).

Residues 49-52 (TCNR), Ser-109, 114-116 (ETQ), and Gln-120 each bind substrate. The active-site Nucleophile is the Cys-50. 189 to 194 (GAGKMS) contributes to the NADP(+) binding site.

Belongs to the glutamyl-tRNA reductase family. As to quaternary structure, homodimer.

It carries out the reaction (S)-4-amino-5-oxopentanoate + tRNA(Glu) + NADP(+) = L-glutamyl-tRNA(Glu) + NADPH + H(+). It functions in the pathway porphyrin-containing compound metabolism; protoporphyrin-IX biosynthesis; 5-aminolevulinate from L-glutamyl-tRNA(Glu): step 1/2. Its function is as follows. Catalyzes the NADPH-dependent reduction of glutamyl-tRNA(Glu) to glutamate 1-semialdehyde (GSA). In Paenibacillus macerans (Bacillus macerans), this protein is Glutamyl-tRNA reductase.